The chain runs to 260 residues: Ribonuclease 3 (260 aa).

The disordered stretch occupies residues M1–E24. A compositionally biased stretch (basic and acidic residues) spans R12–E24. The 130-residue stretch at F33–G162 folds into the RNase III domain. Residue E75 participates in Mg(2+) binding. D79 is a catalytic residue. D148 and E151 together coordinate Mg(2+). Residue E151 is part of the active site. One can recognise a DRBM domain in the interval D188–Q257.

The protein belongs to the ribonuclease III family. Homodimer. It depends on Mg(2+) as a cofactor.

It localises to the cytoplasm. The catalysed reaction is Endonucleolytic cleavage to 5'-phosphomonoester.. In terms of biological role, digests double-stranded RNA. Involved in the processing of primary rRNA transcript to yield the immediate precursors to the large and small rRNAs (23S and 16S). Processes some mRNAs, and tRNAs when they are encoded in the rRNA operon. Processes pre-crRNA and tracrRNA of type II CRISPR loci if present in the organism. In Shouchella clausii (strain KSM-K16) (Alkalihalobacillus clausii), this protein is Ribonuclease 3.